The sequence spans 164 residues: Peptide deformylase-like (164 aa).

Residue glutamate 133 is part of the active site.

The protein belongs to the polypeptide deformylase family.

This chain is Peptide deformylase-like, found in Agrobacterium fabrum (strain C58 / ATCC 33970) (Agrobacterium tumefaciens (strain C58)).